The chain runs to 136 residues: UPF0310 protein HH_1062 (136 aa).

This sequence belongs to the UPF0310 family.

The chain is UPF0310 protein HH_1062 from Helicobacter hepaticus (strain ATCC 51449 / 3B1).